The following is a 98-amino-acid chain: NADH-ubiquinone oxidoreductase chain 4L (98 aa).

Helical transmembrane passes span 1–21 (MPIIYMNIMLAFTISLLGMLI), 29–49 (SLLCLEGMMLSLFIMNTLMAL), and 58–78 (IVPITLLVFAACEAAVGLALL).

It belongs to the complex I subunit 4L family. In terms of assembly, core subunit of respiratory chain NADH dehydrogenase (Complex I) which is composed of 45 different subunits.

Its subcellular location is the mitochondrion inner membrane. It catalyses the reaction a ubiquinone + NADH + 5 H(+)(in) = a ubiquinol + NAD(+) + 4 H(+)(out). In terms of biological role, core subunit of the mitochondrial membrane respiratory chain NADH dehydrogenase (Complex I) which catalyzes electron transfer from NADH through the respiratory chain, using ubiquinone as an electron acceptor. Part of the enzyme membrane arm which is embedded in the lipid bilayer and involved in proton translocation. The sequence is that of NADH-ubiquinone oxidoreductase chain 4L (MT-ND4L) from Colobus guereza (Mantled guereza).